The chain runs to 721 residues: Glucans biosynthesis glucosyltransferase H (721 aa).

6 helical membrane passes run 52-72 (CSWR…FAIF), 97-117 (NFCW…VLAS), 412-432 (SPFW…AHFI), 459-479 (FYIT…LLMF), 505-525 (ALVA…ILFG), and 570-590 (LLAW…LSGI).

It belongs to the glycosyltransferase 2 family. OpgH subfamily.

The protein resides in the cell inner membrane. Its pathway is glycan metabolism; osmoregulated periplasmic glucan (OPG) biosynthesis. In terms of biological role, involved in the biosynthesis of osmoregulated periplasmic glucans (OPGs). The sequence is that of Glucans biosynthesis glucosyltransferase H from Vibrio cholerae serotype O1 (strain ATCC 39541 / Classical Ogawa 395 / O395).